Consider the following 276-residue polypeptide: Inositol-1-monophosphatase ImpA (276 aa).

Mg(2+) is bound by residues Glu-74, Asp-90, Ile-92, and Asp-93. Residue Glu-74 participates in substrate binding. Substrate-binding positions include Ile-92–Thr-95, Arg-192, and Asp-221. Asp-221 is a binding site for Mg(2+).

It belongs to the inositol monophosphatase superfamily. Mg(2+) is required as a cofactor.

The catalysed reaction is a myo-inositol phosphate + H2O = myo-inositol + phosphate. It participates in polyol metabolism; myo-inositol biosynthesis; myo-inositol from D-glucose 6-phosphate: step 2/2. Its function is as follows. Catalyzes the dephosphorylation of inositol 1-phosphate (I-1-P) to yield free myo-inositol, a key metabolite in mycobacteria. This is Inositol-1-monophosphatase ImpA (impA) from Mycolicibacterium smegmatis (strain ATCC 700084 / mc(2)155) (Mycobacterium smegmatis).